The chain runs to 499 residues: Maturase K (499 aa).

It belongs to the intron maturase 2 family. MatK subfamily.

The protein resides in the plastid. Its subcellular location is the chloroplast. Usually encoded in the trnK tRNA gene intron. Probably assists in splicing its own and other chloroplast group II introns. In Chamaecrista fasciculata (Showy partridge pea), this protein is Maturase K.